We begin with the raw amino-acid sequence, 305 residues long: Outer membrane protein assembly factor BamD (305 aa).

A signal peptide spans methionine 1–glycine 24. Residue cysteine 25 is the site of N-palmitoyl cysteine attachment. Cysteine 25 carries S-diacylglycerol cysteine lipidation. TPR repeat units follow at residues valine 41–serine 74, arginine 78–asparagine 111, serine 113–glutamine 136, and alanine 174–threonine 207.

Belongs to the BamD family. Part of the Bam complex.

It localises to the cell outer membrane. Its function is as follows. Part of the outer membrane protein assembly complex, which is involved in assembly and insertion of beta-barrel proteins into the outer membrane. The protein is Outer membrane protein assembly factor BamD of Caulobacter vibrioides (strain ATCC 19089 / CIP 103742 / CB 15) (Caulobacter crescentus).